A 1717-amino-acid chain; its full sequence is DNA-directed RNA polymerase I subunit RPA1 (1717 aa).

6 residues coordinate Zn(2+): C64, C67, C74, H77, C104, and C107. The clamp stretch occupies residues 110–201 (LTCPRAAIYL…VAQFWKTHMA (92 aa)). 2 residues coordinate Zn(2+): C205 and C208. Positions 327-433 (FTNGQTVNLQ…IRQILEKKEG (107 aa)) are clamp. Positions 410-423 (DSEMDKLMLEKYPG) are rudder. 3 residues coordinate DNA: K431, R436, and R443. Residues 475–549 (YPQPVTPWNV…QGTKVVCRHV (75 aa)) form an involved in RRN3 binding to Pol I complex region. Residue R559 participates in RNA binding. 3 residues coordinate Mg(2+): D595, D597, and D599. RNA is bound at residue D599. A funnel region spans residues 812–890 (KPNADVVRQR…NEINKACMPL (79 aa)). The bridging helix stretch occupies residues 967-1008 (RPPEFFFHCMAGREGLVDTAVKTSRSGYLQRCIIKHLEGLVI). The tract at residues 1067–1162 (ADPQKVLGHI…SLSVWRPDIY (96 aa)) is mediates the interaction with TOP2A. The segment at 1214–1255 (PGEAVGLLAAQSIGEPSTQMTLNTFHFAGRGEMNVTLGIPRL) is trigger loop. A DNA-binding site is contributed by R1256. Residues 1372–1493 (RNVNSRRATQ…RRHSRPQGAE (122 aa)) form a disordered region. Basic and acidic residues predominate over residues 1380 to 1397 (TQKDLNDTEDSGRSQREE). S1393 carries the phosphoserine modification. 2 stretches are compositionally biased toward acidic residues: residues 1398–1419 (ERDE…DADA) and 1429–1450 (EEEV…EVQE). Positions 1452-1464 (GNIKGDGVHQGHE) are enriched in basic and acidic residues. Over residues 1465–1477 (PDEEEHLGLEEEE) the composition is skewed to acidic residues.

The protein belongs to the RNA polymerase beta' chain family. Component of the RNA polymerase I (Pol I) complex consisting of 13 subunits: a ten-subunit catalytic core composed of POLR1A/RPA1, POLR1B/RPA2, POLR1C/RPAC1, POLR1D/RPAC2, POLR1H/RPA12, POLR2E/RPABC1, POLR2F/RPABC2, POLR2H/RPABC3, POLR2K/RPABC4 and POLR2L/RPABC5; a mobile stalk subunit POLR1F/RPA43 protruding from the core and additional subunits homologous to general transcription factors POLR1E/RPA49 and POLR1G/RPA34. Part of Pol I pre-initiation complex (PIC), in which Pol I core assembles with RRN3 and promoter-bound UTBF and SL1/TIF-IB complex. Interacts (via dock II domain) with TOP2A; this interaction may assist Pol I transcription initiation by releasing supercoils occurring during DNA unwinding. Interacts with CAVIN1; this interaction induces the dissociation of Pol I complex paused at rDNA terminator sequences. Interacts with MYO1C. Interacts with ERBB2. Interacts with DDX11. Interacts with RECQL5. Mg(2+) serves as cofactor. Post-translationally, phosphorylated.

Its subcellular location is the nucleus. The protein resides in the nucleolus. The protein localises to the chromosome. The enzyme catalyses RNA(n) + a ribonucleoside 5'-triphosphate = RNA(n+1) + diphosphate. Functionally, catalytic core component of RNA polymerase I (Pol I), a DNA-dependent RNA polymerase which synthesizes ribosomal RNA precursors using the four ribonucleoside triphosphates as substrates. Transcribes 47S pre-rRNAs from multicopy rRNA gene clusters, giving rise to 5.8S, 18S and 28S ribosomal RNAs. Pol I-mediated transcription cycle proceeds through transcription initiation, transcription elongation and transcription termination stages. During transcription initiation, Pol I pre-initiation complex (PIC) is recruited by the selectivity factor 1 (SL1/TIF-IB) complex bound to the core promoter that precedes an rDNA repeat unit. The PIC assembly bends the promoter favoring the formation of the transcription bubble and promoter escape. Once the polymerase has escaped from the promoter it enters the elongation phase during which RNA is actively polymerized, based on complementarity with the template DNA strand. Highly processive, assembles in structures referred to as 'Miller trees' where many elongating Pol I complexes queue and transcribe the same rDNA coding regions. At terminator sequences downstream of the rDNA gene, PTRF interacts with Pol I and halts Pol I transcription leading to the release of the RNA transcript and polymerase from the DNA. Forms Pol I active center together with the second largest subunit POLR1B/RPA2. Appends one nucleotide at a time to the 3' end of the nascent RNA, with POLR1A/RPA1 contributing a Mg(2+)-coordinating DxDGD motif, and POLR1B/RPA2 participating in the coordination of a second Mg(2+) ion and providing lysine residues believed to facilitate Watson-Crick base pairing between the incoming nucleotide and the template base. Typically, Mg(2+) ions direct a 5' nucleoside triphosphate to form a phosphodiester bond with the 3' hydroxyl of the preceding nucleotide of the nascent RNA, with the elimination of pyrophosphate. Has proofreading activity: Pauses and backtracks to allow the cleavage of a missincorporated nucleotide via POLR1H/RPA12. High Pol I processivity is associated with decreased transcription fidelity. The polypeptide is DNA-directed RNA polymerase I subunit RPA1 (Mus musculus (Mouse)).